The chain runs to 137 residues: Cellular retinoic acid-binding protein 1 (137 aa).

Positions 21–31 (KALGVNAMLRK) match the Nuclear localization signal motif. 132 to 134 (RIY) contacts all-trans-retinoate.

It belongs to the calycin superfamily. Fatty-acid binding protein (FABP) family.

The protein resides in the cytoplasm. Functionally, cytosolic CRABPs may regulate the access of retinoic acid to the nuclear retinoic acid receptors. The polypeptide is Cellular retinoic acid-binding protein 1 (crabp1) (Hippocampus comes (Tiger tail seahorse)).